The sequence spans 223 residues: Adenylate kinase (223 aa).

ATP is bound at residue 10–15; that stretch reads GSGKGT. An NMP region spans residues 30 to 59; that stretch reads ESGAIFREHIGGGTELGKQAKAFIERGDLV. AMP is bound by residues Ser31, Arg36, 57–59, 84–87, and Gln91; these read DLV and GFPR. The segment at 125–164 is LID; it reads GRRLCKNDNNHPNNIFIDAIKPNGDVCRVCGGELSARSDD. Arg126 is a binding site for ATP. Arg161 and Arg173 together coordinate AMP. Gly209 contacts ATP.

The protein belongs to the adenylate kinase family. Monomer.

It is found in the cytoplasm. The catalysed reaction is AMP + ATP = 2 ADP. Its pathway is purine metabolism; AMP biosynthesis via salvage pathway; AMP from ADP: step 1/1. Functionally, catalyzes the reversible transfer of the terminal phosphate group between ATP and AMP. Plays an important role in cellular energy homeostasis and in adenine nucleotide metabolism. The polypeptide is Adenylate kinase (Nitratidesulfovibrio vulgaris (strain ATCC 29579 / DSM 644 / CCUG 34227 / NCIMB 8303 / VKM B-1760 / Hildenborough) (Desulfovibrio vulgaris)).